The following is a 379-amino-acid chain: Probable tRNA sulfurtransferase (379 aa).

Residues 52 to 157 (DEFLDKLKFI…RHHAFVFCKI (106 aa)) form the THUMP domain. ATP-binding positions include 175-176 (LL), arginine 257, glycine 279, and glutamine 288.

Belongs to the ThiI family.

It is found in the cytoplasm. The enzyme catalyses [ThiI sulfur-carrier protein]-S-sulfanyl-L-cysteine + a uridine in tRNA + 2 reduced [2Fe-2S]-[ferredoxin] + ATP + H(+) = [ThiI sulfur-carrier protein]-L-cysteine + a 4-thiouridine in tRNA + 2 oxidized [2Fe-2S]-[ferredoxin] + AMP + diphosphate. The catalysed reaction is [ThiS sulfur-carrier protein]-C-terminal Gly-Gly-AMP + S-sulfanyl-L-cysteinyl-[cysteine desulfurase] + AH2 = [ThiS sulfur-carrier protein]-C-terminal-Gly-aminoethanethioate + L-cysteinyl-[cysteine desulfurase] + A + AMP + 2 H(+). It participates in cofactor biosynthesis; thiamine diphosphate biosynthesis. Catalyzes the ATP-dependent transfer of a sulfur to tRNA to produce 4-thiouridine in position 8 of tRNAs, which functions as a near-UV photosensor. Also catalyzes the transfer of sulfur to the sulfur carrier protein ThiS, forming ThiS-thiocarboxylate. This is a step in the synthesis of thiazole, in the thiamine biosynthesis pathway. The sulfur is donated as persulfide by IscS. The chain is Probable tRNA sulfurtransferase from Mycoplasmopsis pulmonis (strain UAB CTIP) (Mycoplasma pulmonis).